The primary structure comprises 143 residues: Putative pre-16S rRNA nuclease (143 aa).

It belongs to the YqgF nuclease family.

It localises to the cytoplasm. Could be a nuclease involved in processing of the 5'-end of pre-16S rRNA. The sequence is that of Putative pre-16S rRNA nuclease from Lactococcus lactis subsp. cremoris (strain SK11).